Consider the following 310-residue polypeptide: Thioredoxin reductase (310 aa).

Residue 34 to 41 participates in FAD binding; that stretch reads NGMQPGGQ. A disulfide bridge connects residues Cys-135 and Cys-138. Residue 281 to 290 coordinates FAD; that stretch reads DVQDKIYRQA.

Belongs to the class-II pyridine nucleotide-disulfide oxidoreductase family. In terms of assembly, homodimer. The cofactor is FAD.

It is found in the cytoplasm. It carries out the reaction [thioredoxin]-dithiol + NADP(+) = [thioredoxin]-disulfide + NADPH + H(+). This Rickettsia conorii (strain ATCC VR-613 / Malish 7) protein is Thioredoxin reductase (trxB).